The chain runs to 97 residues: Glutamyl-tRNA(Gln) amidotransferase subunit C 2 (97 aa).

It belongs to the GatC family. In terms of assembly, heterotrimer of A, B and C subunits.

The enzyme catalyses L-glutamyl-tRNA(Gln) + L-glutamine + ATP + H2O = L-glutaminyl-tRNA(Gln) + L-glutamate + ADP + phosphate + H(+). It catalyses the reaction L-aspartyl-tRNA(Asn) + L-glutamine + ATP + H2O = L-asparaginyl-tRNA(Asn) + L-glutamate + ADP + phosphate + 2 H(+). In terms of biological role, allows the formation of correctly charged Asn-tRNA(Asn) or Gln-tRNA(Gln) through the transamidation of misacylated Asp-tRNA(Asn) or Glu-tRNA(Gln) in organisms which lack either or both of asparaginyl-tRNA or glutaminyl-tRNA synthetases. The reaction takes place in the presence of glutamine and ATP through an activated phospho-Asp-tRNA(Asn) or phospho-Glu-tRNA(Gln). The sequence is that of Glutamyl-tRNA(Gln) amidotransferase subunit C 2 (gatC2) from Clostridium acetobutylicum (strain ATCC 824 / DSM 792 / JCM 1419 / IAM 19013 / LMG 5710 / NBRC 13948 / NRRL B-527 / VKM B-1787 / 2291 / W).